We begin with the raw amino-acid sequence, 651 residues long: MNLKKFFNTPTHEPFRDKKAERNLFARRTLVAFLGILLLTGVLFTNIYQLQIVNFDTYQTRSNGNRIKLLPLPPTRGLIYDRYGKLLAENLTFFGLYIVPEKTENLDRTLDELRYIVGLTDNDIENFKKERRRGTRYTPILLKPNLTEEQISRFAVNGYQYPSLEVRPYFKRHYLYGETMAHILGYVGKMNDKDVERLKREDKFANYAGTNDIGKLGIERYYEDILQGTTGFEEVEINNRGKVIRTLRSRPAVAGKSIHLTIDLALQRYITELLSGLKGAVVVLDPKDSSVLAMVSTPSYDNNLFVDGISSEDYKRLLNDLARPLYSRATQGAYPPASTVKPFIAVAAQTENVITPNTTIFDPGYWVLPNSTKRFRDWKKTGHGDTDLNKAITESSDTYFYQVAYNMGIDRLSNWMKDFGFGMPTGIEIQEETAANIPTREWKQKRYKRPWVQGDTISVGIGQGYWTATPLQVAKATTILVNNGKVNTPHLMKAIEGAVLEPYEDPLLYPDINTPKVAAWEAAKRGMYNVVNAANGTGRKAFADANYRVAGKSGTAQVFSLKENEKYNTAGLKKELHDHAWFTAYAPYDNPKLVVTVILENAGGGSSNAAPLARKVMDYYLNQRLPQVEKYNVPIQQKKDLSQESEQINGR.

A helical membrane pass occupies residues 30-50 (LVAFLGILLLTGVLFTNIYQL). Serine 338 serves as the catalytic Acyl-ester intermediate.

This sequence belongs to the transpeptidase family. MrdA subfamily.

It is found in the cell inner membrane. The catalysed reaction is Preferential cleavage: (Ac)2-L-Lys-D-Ala-|-D-Ala. Also transpeptidation of peptidyl-alanyl moieties that are N-acyl substituents of D-alanine.. The protein operates within cell wall biogenesis; peptidoglycan biosynthesis. In terms of biological role, catalyzes cross-linking of the peptidoglycan cell wall. This is Peptidoglycan D,D-transpeptidase MrdA from Haemophilus influenzae (strain ATCC 51907 / DSM 11121 / KW20 / Rd).